Consider the following 943-residue polypeptide: 2-oxoglutarate dehydrogenase E1 component (943 aa).

The protein belongs to the alpha-ketoglutarate dehydrogenase family. As to quaternary structure, homodimer. Part of the 2-oxoglutarate dehydrogenase (OGDH) complex composed of E1 (2-oxoglutarate dehydrogenase), E2 (dihydrolipoamide succinyltransferase) and E3 (dihydrolipoamide dehydrogenase); the complex contains multiple copies of the three enzymatic components (E1, E2 and E3). The cofactor is thiamine diphosphate.

It catalyses the reaction N(6)-[(R)-lipoyl]-L-lysyl-[protein] + 2-oxoglutarate + H(+) = N(6)-[(R)-S(8)-succinyldihydrolipoyl]-L-lysyl-[protein] + CO2. E1 component of the 2-oxoglutarate dehydrogenase (OGDH) complex which catalyzes the decarboxylation of 2-oxoglutarate, the first step in the conversion of 2-oxoglutarate to succinyl-CoA and CO(2). The protein is 2-oxoglutarate dehydrogenase E1 component of Shouchella clausii (strain KSM-K16) (Alkalihalobacillus clausii).